The chain runs to 82 residues: Antitoxin MazE2 (82 aa).

As to quaternary structure, probably forms a complex with cognate toxin MazF2.

Functionally, antitoxin component of a type II toxin-antitoxin (TA) system. Labile antitoxin that binds to cognate MazF2 toxin and counteracts its endoribonuclease activity. This is Antitoxin MazE2 (mazE2) from Mycobacterium bovis (strain ATCC BAA-935 / AF2122/97).